The primary structure comprises 879 residues: Beta-mannosidase (879 aa).

Residues 1–19 form the signal peptide; sequence MHLHLLLILALFRAGCVVA. Asparagine 35, asparagine 77, asparagine 89, and asparagine 113 each carry an N-linked (GlcNAc...) asparagine glycan. Cysteines 167 and 176 form a disulfide. Position 190–192 (190–192) interacts with substrate; sequence WDW. N-linked (GlcNAc...) asparagine glycans are attached at residues asparagine 226, asparagine 297, and asparagine 302. Asparagine 456 contributes to the substrate binding site. Glutamate 457 acts as the Proton donor in catalysis. 3 disulfides stabilise this stretch: cysteine 540-cysteine 629, cysteine 732-cysteine 761, and cysteine 764-cysteine 769. Residue glutamate 554 is the Nucleophile of the active site. Residue asparagine 736 is glycosylated (N-linked (GlcNAc...) asparagine). Asparagine 803 and asparagine 807 each carry an N-linked (GlcNAc...) asparagine glycan.

It belongs to the glycosyl hydrolase 2 family. As to quaternary structure, monomer. As to expression, highest level in liver, high levels in lung, testis, skin and spleen, moderate level in thymus. Activity found in plasma, kidney, liver, spleen, pancreas, brain, testis, epididymis, heart, lung and skeletal muscle.

The protein localises to the lysosome. The enzyme catalyses Hydrolysis of terminal, non-reducing beta-D-mannose residues in beta-D-mannosides.. It participates in glycan metabolism; N-glycan degradation. Exoglycosidase that cleaves the single beta-linked mannose residue from the non-reducing end of all N-linked glycoprotein oligosaccharides. The sequence is that of Beta-mannosidase from Mus musculus (Mouse).